A 947-amino-acid polypeptide reads, in one-letter code: Bifunctional glutamine synthetase adenylyltransferase/adenylyl-removing enzyme (947 aa).

The segment at 1–440 is adenylyl removase; the sequence is MTPLSSPLSQ…VFNELIGDDE (440 aa). The segment at 450 to 947 is adenylyl transferase; that stretch reads SEPWREVWQD…ASWRKWLVAV (498 aa).

Belongs to the GlnE family. The cofactor is Mg(2+).

The enzyme catalyses [glutamine synthetase]-O(4)-(5'-adenylyl)-L-tyrosine + phosphate = [glutamine synthetase]-L-tyrosine + ADP. It catalyses the reaction [glutamine synthetase]-L-tyrosine + ATP = [glutamine synthetase]-O(4)-(5'-adenylyl)-L-tyrosine + diphosphate. Involved in the regulation of glutamine synthetase GlnA, a key enzyme in the process to assimilate ammonia. When cellular nitrogen levels are high, the C-terminal adenylyl transferase (AT) inactivates GlnA by covalent transfer of an adenylyl group from ATP to specific tyrosine residue of GlnA, thus reducing its activity. Conversely, when nitrogen levels are low, the N-terminal adenylyl removase (AR) activates GlnA by removing the adenylyl group by phosphorolysis, increasing its activity. The regulatory region of GlnE binds the signal transduction protein PII (GlnB) which indicates the nitrogen status of the cell. This is Bifunctional glutamine synthetase adenylyltransferase/adenylyl-removing enzyme from Salmonella enteritidis PT4 (strain P125109).